Consider the following 892-residue polypeptide: Zinc finger protein 512B (892 aa).

Positions 1-82 (MTDPFCVGGR…KKGRPKAENQ (82 aa)) are disordered. Residues 8-19 (GGRRLPGSSKSG) show a composition bias toward low complexity. A C2H2-type 1; atypical zinc finger spans residues 105–129 (VKCPNSGCWLEFPSIYGLKYHYQRC). The C2H2-type 2 zinc finger occupies 140-163 (FPCPFCEAAFTSKTQLEKHRIWNH). 2 disordered regions span residues 323 to 473 (MVLL…RKKV) and 562 to 582 (EHSA…EERE). Polar residues predominate over residues 371–384 (SMGQSSAFQLSADT). Residues 385–398 (SSGSLSPGSRPSGG) show a composition bias toward low complexity. Phosphoserine is present on Ser409. Residues 418–428 (TKHRRKQKTPK) are compositionally biased toward basic residues. The short motif at 421-427 (RRKQKTP) is the NuRD interaction motif element. Residues 540 to 563 (LKCQHCRKQFKSKAGLNYHTMAEH) form a C2H2-type 3 zinc finger. Residues 594 to 618 (LRCPQEGCGAAFSSLMGYQYHQRRC) form a C2H2-type 4; atypical zinc finger. The segment at 630–653 (FPCTHCGKTYRSKAGHDYHVRSEH) adopts a C2H2-type 5 zinc-finger fold. The disordered stretch occupies residues 649-682 (VRSEHTAPPPEEPTDKSPEAEDPLGVERTPSGRV). Ser686 bears the Phosphoserine mark. The C2H2-type 6; atypical zinc-finger motif lies at 750–774 (VNCPNDCCEAIYSSVSGLKAHLASC). The C2H2-type 7 zinc finger occupies 784 to 807 (YRCLLCPKEFSSESGVKYHILKTH). Residues 812 to 892 (FRTSADPPPK…KVGVSKAPEK (81 aa)) form a disordered region. Positions 819–831 (PPKHRSQDSLVPK) are enriched in basic and acidic residues. Positions 832–849 (KEKKKNLAGGKKRGRKPK) are enriched in basic residues. Over residues 850–876 (ERTPEEPVAKLPPRRDDWPPGCRDKGA) the composition is skewed to basic and acidic residues.

This sequence belongs to the krueppel C2H2-type zinc-finger protein family. As to quaternary structure, interacts (via its NuRD interaction motif) with RBBP4 of the nucleosome remodeling and deacetylase (NuRD) complex; the interaction is direct and may play a role in repressing gene expression.

It is found in the nucleus. Involved in transcriptional regulation by repressing gene expression. Associates with the nucleosome remodeling and histone deacetylase (NuRD) complex, which promotes transcriptional repression by histone deacetylation and nucleosome remodeling. The polypeptide is Zinc finger protein 512B (ZNF512B) (Homo sapiens (Human)).